The chain runs to 926 residues: Peripheral plasma membrane protein CASK (926 aa).

The Protein kinase domain maps to 12-276; sequence YELCEVIGKG…VYEALNHPWL (265 aa). Residues 18 to 26 and K41 contribute to the ATP site; that span reads IGKGPFSVV. S51 is modified (phosphoserine). Residue D141 is part of the active site. 2 positions are modified to phosphoserine; by autocatalysis: S151 and S155. T182 is subject to Phosphothreonine. Residues K192 and S313 each carry the phosphoserine modification. Positions 305–315 are calmodulin-binding; the sequence is KGAVLAAVSSH. 2 consecutive L27 domains span residues 343 to 398 and 402 to 455; these read AERA…SPQI and PSDA…YSDE. The segment at 482 to 909 is required for interaction with NRXN1 (via C-terminal tail); that stretch reads MENVTRVRLV…DETIRHLEEA (428 aa). Residues 489 to 564 enclose the PDZ domain; that stretch reads RLVQFQKNTD…MLREMRGSIT (76 aa). Phosphoserine is present on residues Y571 and S577. The interval 574–610 is disordered; sequence QSSSCERDSPSTSRQSPANGHSSTNNSVSDLPSTTQP. Positions 612-682 constitute an SH3 domain; it reads GRQIYVRAQF…PSPELQEWRV (71 aa). The Guanylate kinase-like domain maps to 739–911; it reads RKTLVLLGAH…TIRHLEEAVE (173 aa).

It in the N-terminal section; belongs to the protein kinase superfamily. CAMK Ser/Thr protein kinase family. CaMK subfamily. The protein belongs to the MAGUK family. CASK and LIN7 form two mutually exclusive tripartite complexes with APBA1 or CASKIN1. Component of the brain-specific heterotrimeric complex (LIN-10-LIN-2-LIN-7 complex) composed of at least APBA1, CASK, and LIN7, which associates with the motor protein KIF17 to transport vesicles along microtubules. Forms a heterotrimeric complex with DLG1 and LIN7B via their L27 domains. Identified in a complex with ACTN4, IQGAP1, MAGI2, NPHS1, SPTAN1 and SPTBN1. Part of a complex containing CASK, TBR1 and TSPYL2. Interacts with WHRN. Interacts (via the PDZ, SH3 and guanylate kinase-like domains) with NRXN1 (via C-terminus). Interacts with CASKIN1, APBA1, LIN7(A/B/C) and L27 domain of DLG1 and isoform 2 of DLG4. Interacts with FCHSD2. Interacts with KIRREL3. Interacts with TBR1. Interacts with TSPYL2. Requires Unlike other protein kinases, does not require a divalent cation such as magnesium for catalytic activity. as cofactor. Ubiquitous. Expression is significantly greater in brain relative to kidney, lung, and liver and in fetal brain and kidney relative to lung and liver.

The protein resides in the nucleus. The protein localises to the cytoplasm. It localises to the cell membrane. The enzyme catalyses L-seryl-[protein] + ATP = O-phospho-L-seryl-[protein] + ADP + H(+). The catalysed reaction is L-threonyl-[protein] + ATP = O-phospho-L-threonyl-[protein] + ADP + H(+). Differs from archetypal CaMK members in that the kinase domain exhibits a constitutively active conformation and the autoinhibitory region does not engage in direct contact with the ATP-binding cleft, although it still binds Ca(2+)/CAM. In terms of biological role, multidomain scaffolding Mg(2+)-independent protein kinase that catalyzes the phosphotransfer from ATP to proteins such as NRXN1, and plays a role in synaptic transmembrane protein anchoring and ion channel trafficking. Contributes to neural development and regulation of gene expression via interaction with the transcription factor TBR1. Binds to cell-surface proteins, including amyloid precursor protein, neurexins and syndecans. May mediate a link between the extracellular matrix and the actin cytoskeleton via its interaction with syndecan and with the actin/spectrin-binding protein 4.1. Component of the LIN-10-LIN-2-LIN-7 complex, which associates with the motor protein KIF17 to transport vesicles containing N-methyl-D-aspartate (NMDA) receptor subunit NR2B along microtubules. The sequence is that of Peripheral plasma membrane protein CASK from Homo sapiens (Human).